Here is an 814-residue protein sequence, read N- to C-terminus: Valine--tRNA ligase (814 aa).

The short motif at P46–H56 is the 'HIGH' region element. Positions K536 to S540 match the 'KMSKS' region motif. Residue K539 participates in ATP binding.

This sequence belongs to the class-I aminoacyl-tRNA synthetase family. ValS type 2 subfamily. As to quaternary structure, monomer.

The protein localises to the cytoplasm. The enzyme catalyses tRNA(Val) + L-valine + ATP = L-valyl-tRNA(Val) + AMP + diphosphate. Functionally, catalyzes the attachment of valine to tRNA(Val). As ValRS can inadvertently accommodate and process structurally similar amino acids such as threonine, to avoid such errors, it has a 'posttransfer' editing activity that hydrolyzes mischarged Thr-tRNA(Val) in a tRNA-dependent manner. The polypeptide is Valine--tRNA ligase (Rickettsia prowazekii (strain Madrid E)).